Here is a 267-residue protein sequence, read N- to C-terminus: Low affinity immunoglobulin gamma Fc region receptor III (267 aa).

The first 36 residues, 1–36 (MTLETQMFQNAHSGSQWLLPPLTMLLLFAFADRQTA), serve as a signal peptide directing secretion. Over 37–221 (NLPKAVVKRD…STSSLVWFHA (185 aa)) the chain is Extracellular. 2 Ig-like C2-type domains span residues 39–121 (PKAV…EVIS) and 122–204 (DWLL…VTIT). 2 cysteine pairs are disulfide-bonded: cysteine 62/cysteine 104 and cysteine 143/cysteine 187. Asparagine 70, asparagine 78, asparagine 97, asparagine 171, and asparagine 178 each carry an N-linked (GlcNAc...) asparagine glycan. A helical membrane pass occupies residues 222–241 (AFCLVMCLLFAVDTGLYFCV). Topologically, residues 242–267 (RRNLQTSGEDWRKSLSVGKYKAPQDK) are cytoplasmic.

As to quaternary structure, may form multisubunit complex with other heteroproteins. This association is required for efficient cell-surface expression. Does not associate with CD3 zeta. As to expression, expressed on natural killer cells and macrophages.

Its subcellular location is the cell membrane. In terms of biological role, receptor for the Fc region of complexed immunoglobulins gamma. Low affinity receptor which binds to IgG1, IgG2a and IgG2b. Mediates neutrophil activation by IgG complexes redundantly with Fcgr4. This Rattus norvegicus (Rat) protein is Low affinity immunoglobulin gamma Fc region receptor III (Fcgr3).